The following is a 102-amino-acid chain: Putative toxin YafQ (102 aa).

This sequence belongs to the RelE toxin family. YafQ subfamily.

Toxic component of a type II toxin-antitoxin (TA) system. Its cognate antitoxin is RelB. The sequence is that of Putative toxin YafQ from Haemophilus influenzae (strain ATCC 51907 / DSM 11121 / KW20 / Rd).